A 206-amino-acid polypeptide reads, in one-letter code: Proteasome subunit beta 1 (206 aa).

Residues 1-14 (MSRIHNDPKVLLTG) constitute a propeptide, removed in mature form; by autocatalysis. Threonine 15 (nucleophile) is an active-site residue.

This sequence belongs to the peptidase T1B family. In terms of assembly, the 20S proteasome core is composed of 14 alpha and 14 beta subunits that assemble into four stacked heptameric rings, resulting in a barrel-shaped structure. The two inner rings, each composed of seven catalytic beta subunits, are sandwiched by two outer rings, each composed of seven alpha subunits. The catalytic chamber with the active sites is on the inside of the barrel. Has a gated structure, the ends of the cylinder being occluded by the N-termini of the alpha-subunits. Is capped at one or both ends by the proteasome regulatory ATPase, PAN.

It is found in the cytoplasm. The catalysed reaction is Cleavage of peptide bonds with very broad specificity.. With respect to regulation, the formation of the proteasomal ATPase PAN-20S proteasome complex, via the docking of the C-termini of PAN into the intersubunit pockets in the alpha-rings, triggers opening of the gate for substrate entry. Interconversion between the open-gate and close-gate conformations leads to a dynamic regulation of the 20S proteasome proteolysis activity. In terms of biological role, component of the proteasome core, a large protease complex with broad specificity involved in protein degradation. The protein is Proteasome subunit beta 1 of Caldivirga maquilingensis (strain ATCC 700844 / DSM 13496 / JCM 10307 / IC-167).